A 276-amino-acid polypeptide reads, in one-letter code: tRNA (guanine-N(7)-)-methyltransferase (276 aa).

Residues 1–23 (MRPDPAPLDPTDASPAQARRHQP) are disordered. E103, E128, D155, and D178 together coordinate S-adenosyl-L-methionine. D178 is an active-site residue. Substrate contacts are provided by residues K182, D214, and 252–255 (TRYE).

Belongs to the class I-like SAM-binding methyltransferase superfamily. TrmB family.

The enzyme catalyses guanosine(46) in tRNA + S-adenosyl-L-methionine = N(7)-methylguanosine(46) in tRNA + S-adenosyl-L-homocysteine. It participates in tRNA modification; N(7)-methylguanine-tRNA biosynthesis. Its function is as follows. Catalyzes the formation of N(7)-methylguanine at position 46 (m7G46) in tRNA. The protein is tRNA (guanine-N(7)-)-methyltransferase of Cutibacterium acnes (strain DSM 16379 / KPA171202) (Propionibacterium acnes).